The sequence spans 553 residues: Hydroxylamine reductase (553 aa).

Residues Cys3, Cys6, Cys18, and Cys25 each coordinate [2Fe-2S] cluster. Hybrid [4Fe-2O-2S] cluster contacts are provided by His249, Glu273, Cys317, Cys405, Cys433, Cys459, Glu493, and Lys495. The residue at position 405 (Cys405) is a Cysteine persulfide.

Belongs to the HCP family. It depends on [2Fe-2S] cluster as a cofactor. Hybrid [4Fe-2O-2S] cluster is required as a cofactor.

The protein resides in the cytoplasm. It carries out the reaction A + NH4(+) + H2O = hydroxylamine + AH2 + H(+). In terms of biological role, catalyzes the reduction of hydroxylamine to form NH(3) and H(2)O. The chain is Hydroxylamine reductase from Mannheimia succiniciproducens (strain KCTC 0769BP / MBEL55E).